A 258-amino-acid polypeptide reads, in one-letter code: Deoxyribose-phosphate aldolase (258 aa).

Asp-102 acts as the Proton donor/acceptor in catalysis. Lys-165 acts as the Schiff-base intermediate with acetaldehyde in catalysis. Lys-199 functions as the Proton donor/acceptor in the catalytic mechanism.

It belongs to the DeoC/FbaB aldolase family. DeoC type 2 subfamily.

It localises to the cytoplasm. It carries out the reaction 2-deoxy-D-ribose 5-phosphate = D-glyceraldehyde 3-phosphate + acetaldehyde. It participates in carbohydrate degradation; 2-deoxy-D-ribose 1-phosphate degradation; D-glyceraldehyde 3-phosphate and acetaldehyde from 2-deoxy-alpha-D-ribose 1-phosphate: step 2/2. Its function is as follows. Catalyzes a reversible aldol reaction between acetaldehyde and D-glyceraldehyde 3-phosphate to generate 2-deoxy-D-ribose 5-phosphate. This Vibrio vulnificus (strain CMCP6) protein is Deoxyribose-phosphate aldolase.